The chain runs to 684 residues: Actin-related protein 5 (684 aa).

A coiled-coil region spans residues 262-469 (KEKSVIIQLP…ARQKQKQKAN (208 aa)). 2 disordered regions span residues 392–443 (KEKK…PEHY) and 481–500 (VNPTNHGNYGEKGEEVEDPE). The span at 402 to 443 (SMKDGRLAQKRKRDEEKEKEKEKEEERDRQEEESFLKDPEHY) shows a compositional bias: basic and acidic residues.

Belongs to the actin family. ARP5 subfamily. Component of the chromatin-remodeling Ino80 complex.

It localises to the nucleus. In terms of biological role, proposed core component of the chromatin remodeling Ino80 complex which is involved in transcriptional regulation, DNA replication and probably DNA repair. In Dictyostelium discoideum (Social amoeba), this protein is Actin-related protein 5 (arpE).